The primary structure comprises 591 residues: General transcription and DNA repair factor IIH subunit TFB1-1 (591 aa).

2 BSD domains span residues 112-166 (STSS…GKDS) and 191-243 (RTNR…YLYS).

It belongs to the TFB1 family. Component of the 7-subunit TFIIH core complex composed of XPB, XPD, TFB1/GTF2H1, GTF2H2/P44, TFB4/GTF2H3, TFB2/GTF2H4 and TFB5/GTF2H5, which is active in NER. The core complex associates with the 3-subunit CDK-activating kinase (CAK) module composed of CYCH1/cyclin H1, CDKD and MAT1/At4g30820 to form the 10-subunit holoenzyme (holo-TFIIH) active in transcription.

It is found in the nucleus. Component of the general transcription and DNA repair factor IIH (TFIIH) core complex, which is involved in general and transcription-coupled nucleotide excision repair (NER) of damaged DNA and, when complexed to CAK, in RNA transcription by RNA polymerase II. In NER, TFIIH acts by opening DNA around the lesion to allow the excision of the damaged oligonucleotide and its replacement by a new DNA fragment. In transcription, TFIIH has an essential role in transcription initiation. When the pre-initiation complex (PIC) has been established, TFIIH is required for promoter opening and promoter escape. Phosphorylation of the C-terminal tail (CTD) of the largest subunit of RNA polymerase II by the kinase module CAK controls the initiation of transcription. This is General transcription and DNA repair factor IIH subunit TFB1-1 from Arabidopsis thaliana (Mouse-ear cress).